Here is a 556-residue protein sequence, read N- to C-terminus: Putative solute carrier family 22 member 31 (556 aa).

Topologically, residues 1–23 (MEQEARVLRAAGGFGRARRLLAS) are cytoplasmic. A helical membrane pass occupies residues 24 to 44 (ASWVPCIVLGLVLSSEELLTA). Residues 45–128 (QPAPHCRPDP…WNLVCGDGWK (84 aa)) lie on the Extracellular side of the membrane. A helical membrane pass occupies residues 129–149 (VPLEQVSHLLGWLLGCVILGA). The Cytoplasmic segment spans residues 150–157 (GCDRFGRR). Residues 158-178 (AVFVASLVLTTGLGASEALAA) traverse the membrane as a helical segment. Residues 179 to 182 (SFPT) are Extracellular-facing. Residues 183 to 203 (LLVLRLLHGGTLAGALLALYL) traverse the membrane as a helical segment. The Cytoplasmic portion of the chain corresponds to 204–218 (ARLELCDPPHRLAFS). Residues 219-239 (MGAGLFSVVGTLLLPGLAALV) traverse the membrane as a helical segment. Over 240–246 (QDWRLLQ) the chain is Extracellular. A helical membrane pass occupies residues 247-267 (GLGALMSGLLLLFWGFPALFP). The Cytoplasmic segment spans residues 268-339 (ESPCWLLATG…LRTRVTWRNG (72 aa)). Residues 340–357 (LILGFSSLVGGGIRASFR) form a helical membrane-spanning segment. Topologically, residues 358-366 (RSLAPQVPT) are extracellular. A helical membrane pass occupies residues 367–387 (FYLPYFLEAGLEAAALVFLLL). Residues 388–395 (TADCCGRR) lie on the Cytoplasmic side of the membrane. Residues 396 to 416 (PVLLLGTMVTGLASLLLLAGA) form a helical membrane-spanning segment. Topologically, residues 417–420 (QYLP) are extracellular. A helical transmembrane segment spans residues 421–441 (GWTVLFLSVLGLLASRAVSAL). The Cytoplasmic segment spans residues 442–448 (SSLFAAE). The chain crosses the membrane as a helical span at residues 449 to 469 (VFPTVIRGAGLGLVLGAGFLG). Over 470 to 483 (QAAGPLDTLHGRQG) the chain is Extracellular. Residues 484-504 (FFLQQVVFASLAVLALLCVLL) form a helical membrane-spanning segment. Over 505–556 (LPESRSRGLPQSLQDADRLRRSPLLRGRPRQDHLPLLPPSNSYWAGHTPEQH) the chain is Cytoplasmic. The tract at residues 524–556 (RRSPLLRGRPRQDHLPLLPPSNSYWAGHTPEQH) is disordered.

Belongs to the major facilitator (TC 2.A.1) superfamily. Organic cation transporter (TC 2.A.1.19) family.

Its subcellular location is the membrane. In terms of biological role, organic anion transporter that mediates the uptake of ions. The chain is Putative solute carrier family 22 member 31 from Homo sapiens (Human).